Here is a 1010-residue protein sequence, read N- to C-terminus: Retinoblastoma-related protein 1 (1010 aa).

The tract at residues 1-23 is disordered; it reads MEGAAPPASSGSEVTGAGSGKVD. The tract at residues 419–619 is domain A; it reads TPVSTAMTTA…EKGSSMYNSL (201 aa). A pocket region spans residues 419–861; the sequence is TPVSTAMTTA…NEVFIPTVKP (443 aa). The spacer stretch occupies residues 620-730; sequence IVARPTLSAE…PAAGGELCAE (111 aa). Residues 657 to 679 are disordered; sequence LPPLPFQKQEHSPDKDEVRSPKR. Residues 664-679 are compositionally biased toward basic and acidic residues; sequence KQEHSPDKDEVRSPKR. The tract at residues 731-861 is domain B; sequence TGIGVFLSKI…NEVFIPTVKP (131 aa). A disordered region spans residues 868-898; the sequence is SGTSPNKKNEEKCAADGPYPESPRLSRFPNL.

It belongs to the retinoblastoma protein (RB) family.

It localises to the nucleus. Its function is as follows. Regulator of biological processes that recruits a histone deacetylase to control gene transcription. May play a role in the entry into mitosis, negatively regulating the cell proliferation. Formation of stable complexes with geminiviridae replication-associated proteins may create a cellular environment which favors viral DNA replication. The chain is Retinoblastoma-related protein 1 (RBR1) from Oryza sativa subsp. japonica (Rice).